The chain runs to 79 residues: Acyl carrier protein (79 aa).

One can recognise a Carrier domain in the interval 2–77 (SEVADKVKKI…DAVEYIEKQK (76 aa)). The residue at position 37 (S37) is an O-(pantetheine 4'-phosphoryl)serine.

The protein belongs to the acyl carrier protein (ACP) family. Post-translationally, 4'-phosphopantetheine is transferred from CoA to a specific serine of apo-ACP by AcpS. This modification is essential for activity because fatty acids are bound in thioester linkage to the sulfhydryl of the prosthetic group.

It localises to the cytoplasm. It participates in lipid metabolism; fatty acid biosynthesis. Its function is as follows. Carrier of the growing fatty acid chain in fatty acid biosynthesis. The protein is Acyl carrier protein of Granulibacter bethesdensis (strain ATCC BAA-1260 / CGDNIH1).